The following is a 443-amino-acid chain: Protein UIP5 (443 aa).

The signal sequence occupies residues 1-27 (MSRDVRAEKLAISLLILSLFLIFQLVA). Over 28-398 (EIYLNNGDQY…LFKVVLTIWH (371 aa)) the chain is Perinuclear space. The chain crosses the membrane as a helical span at residues 399–420 (YSEILLLIMGIYLFSACIRVFQ). Residues 421–443 (RRFKKIRSRRKRAGSHSVGLLPM) lie on the Cytoplasmic side of the membrane.

It localises to the nucleus membrane. The polypeptide is Protein UIP5 (UIP5) (Saccharomyces cerevisiae (strain ATCC 204508 / S288c) (Baker's yeast)).